The following is a 214-amino-acid chain: Phosphatidylserine decarboxylase proenzyme (214 aa).

The active-site Schiff-base intermediate with substrate; via pyruvic acid is Ser182. Residue Ser182 is modified to Pyruvic acid (Ser); by autocatalysis.

Belongs to the phosphatidylserine decarboxylase family. PSD-A subfamily. In terms of assembly, heterodimer of a large membrane-associated beta subunit and a small pyruvoyl-containing alpha subunit. Pyruvate serves as cofactor. Is synthesized initially as an inactive proenzyme. Formation of the active enzyme involves a self-maturation process in which the active site pyruvoyl group is generated from an internal serine residue via an autocatalytic post-translational modification. Two non-identical subunits are generated from the proenzyme in this reaction, and the pyruvate is formed at the N-terminus of the alpha chain, which is derived from the carboxyl end of the proenzyme. The post-translation cleavage follows an unusual pathway, termed non-hydrolytic serinolysis, in which the side chain hydroxyl group of the serine supplies its oxygen atom to form the C-terminus of the beta chain, while the remainder of the serine residue undergoes an oxidative deamination to produce ammonia and the pyruvoyl prosthetic group on the alpha chain.

Its subcellular location is the cell membrane. The catalysed reaction is a 1,2-diacyl-sn-glycero-3-phospho-L-serine + H(+) = a 1,2-diacyl-sn-glycero-3-phosphoethanolamine + CO2. Its pathway is phospholipid metabolism; phosphatidylethanolamine biosynthesis; phosphatidylethanolamine from CDP-diacylglycerol: step 2/2. Its function is as follows. Catalyzes the formation of phosphatidylethanolamine (PtdEtn) from phosphatidylserine (PtdSer). In Burkholderia cenocepacia (strain HI2424), this protein is Phosphatidylserine decarboxylase proenzyme.